Reading from the N-terminus, the 85-residue chain is Large ribosomal subunit protein bL31B (85 aa).

Belongs to the bacterial ribosomal protein bL31 family. Type B subfamily. Part of the 50S ribosomal subunit.

The polypeptide is Large ribosomal subunit protein bL31B (Kocuria rhizophila (strain ATCC 9341 / DSM 348 / NBRC 103217 / DC2201)).